The following is a 313-amino-acid chain: 7,8-didemethyl-8-hydroxy-5-deazariboflavin synthase (313 aa).

The 232-residue stretch at 4–235 (ITYSPAYTLV…AEITLQIPPN (232 aa)) folds into the Radical SAM core domain. Positions 18, 22, and 25 each coordinate [4Fe-4S] cluster.

It belongs to the radical SAM superfamily. CofG family. In terms of assembly, consists of two subunits, CofG and CofH. [4Fe-4S] cluster serves as cofactor.

It carries out the reaction 5-amino-5-(4-hydroxybenzyl)-6-(D-ribitylimino)-5,6-dihydrouracil + S-adenosyl-L-methionine = 7,8-didemethyl-8-hydroxy-5-deazariboflavin + 5'-deoxyadenosine + L-methionine + NH4(+) + H(+). It participates in cofactor biosynthesis; coenzyme F0 biosynthesis. Catalyzes the radical-mediated synthesis of 7,8-didemethyl-8-hydroxy-5-deazariboflavin from 5-amino-5-(4-hydroxybenzyl)-6-(D-ribitylimino)-5,6-dihydrouracil. In Synechocystis sp. (strain ATCC 27184 / PCC 6803 / Kazusa), this protein is 7,8-didemethyl-8-hydroxy-5-deazariboflavin synthase.